A 530-amino-acid chain; its full sequence is Na(+)/H(+) antiporter NhaB (530 aa).

12 consecutive transmembrane segments (helical) span residues F13–P33, L98–F118, L123–F145, L149–Y166, L205–P225, F238–L258, I308–L328, V330–F350, F356–F376, L393–G413, A451–I471, and I480–F500.

The protein belongs to the NhaB Na(+)/H(+) (TC 2.A.34) antiporter family.

It is found in the cell inner membrane. It carries out the reaction 2 Na(+)(in) + 3 H(+)(out) = 2 Na(+)(out) + 3 H(+)(in). Na(+)/H(+) antiporter that extrudes sodium in exchange for external protons. This is Na(+)/H(+) antiporter NhaB from Vibrio atlanticus (strain LGP32) (Vibrio splendidus (strain Mel32)).